The sequence spans 295 residues: UDP-N-acetylenolpyruvoylglucosamine reductase (295 aa).

The FAD-binding PCMH-type domain maps to 23–188 (KVGGPADFLA…ISAKFALKPG (166 aa)). The active site involves arginine 167. Serine 217 acts as the Proton donor in catalysis. The active site involves glutamate 287.

Belongs to the MurB family. It depends on FAD as a cofactor.

The protein resides in the cytoplasm. It catalyses the reaction UDP-N-acetyl-alpha-D-muramate + NADP(+) = UDP-N-acetyl-3-O-(1-carboxyvinyl)-alpha-D-glucosamine + NADPH + H(+). Its pathway is cell wall biogenesis; peptidoglycan biosynthesis. Functionally, cell wall formation. In Streptococcus pyogenes serotype M3 (strain ATCC BAA-595 / MGAS315), this protein is UDP-N-acetylenolpyruvoylglucosamine reductase.